Consider the following 485-residue polypeptide: Adenylate kinase 8 (485 aa).

Adenylate kinase stretches follow at residues 58-258 (PRVF…TFVL) and 269-471 (PRIL…SYIV). 67–72 (ASGKHT) contributes to the ATP binding site. An NMP 1 region spans residues 87–113 (TPENVLSSDVSLLVKEAQSYRDKGQEV). Residues 140–143 (GFPK) and Q147 each bind AMP. The LID 1 stretch occupies residues 177–206 (GKRIDITDGEVYHTTFDWPSDPAVQRNLVE). An AMP-binding site is contributed by R218. Position 278-283 (278-283 (GSGRSL)) interacts with ATP. Residues 298-327 (CCGQVLKEAVADQTKLGELIQPYIENDQQV) are NMP 2. AMP-binding positions include 325-327 (QQV), 354-357 (GFPQ), and Q361. The interval 391–424 (LCMTDPVSGERYHSIYKPAPRSEVQERLQQNPKY) is LID 2. AMP is bound at residue R432.

This sequence belongs to the adenylate kinase family.

It is found in the cytoplasm. The protein resides in the cytosol. The catalysed reaction is AMP + ATP = 2 ADP. It carries out the reaction a 2'-deoxyribonucleoside 5'-diphosphate + ATP = a 2'-deoxyribonucleoside 5'-triphosphate + ADP. The enzyme catalyses a ribonucleoside 5'-diphosphate + ATP = a ribonucleoside 5'-triphosphate + ADP. In terms of biological role, nucleoside monophosphate (NMP) kinase that catalyzes the reversible transfer of the terminal phosphate group between nucleoside triphosphates and monophosphates. Has highest activity toward AMP, and weaker activity toward dAMP, CMP and dCMP. Also displays broad nucleoside diphosphate kinase activity. The chain is Adenylate kinase 8 (ak8) from Xenopus laevis (African clawed frog).